The following is a 102-amino-acid chain: Small ribosomal subunit protein uS10 (102 aa).

It belongs to the universal ribosomal protein uS10 family. As to quaternary structure, part of the 30S ribosomal subunit.

Involved in the binding of tRNA to the ribosomes. This chain is Small ribosomal subunit protein uS10, found in Trichlorobacter lovleyi (strain ATCC BAA-1151 / DSM 17278 / SZ) (Geobacter lovleyi).